Here is a 571-residue protein sequence, read N- to C-terminus: Oxysterol-binding protein 11 (571 aa).

The segment at 1–73 (MSNFFKKLVK…IGEQIDTLDD (73 aa)) is disordered. Polar residues predominate over residues 33–42 (NGNQVVPDTA). Low complexity predominate over residues 43–54 (SSYSDDSNSLSD). A coiled-coil region spans residues 387–420 (YLEREENKLANKEKNKIEEREREKRKTRESRKEI).

The protein belongs to the OSBP family.

The sequence is that of Oxysterol-binding protein 11 (osbK) from Dictyostelium discoideum (Social amoeba).